The following is a 69-amino-acid chain: uncharacterized protein (69 aa).

Residues 1-15 (MLLYIVIIVACIISK) are Cytoplasmic-facing. Residues 16–36 (LVPNEYWAIHLFFIIMIFMVY) form a helical membrane-spanning segment. The Extracellular segment spans residues 37–69 (MYKKLDIHQKYQFWNYTMSGLSGHNVQVTCKCY). Asn-51 is a glycosylation site (N-linked (GlcNAc...) asparagine; by host).

It belongs to the asfivirus X69R family.

The protein localises to the host membrane. This is an uncharacterized protein from African swine fever virus (isolate Tick/Malawi/Lil 20-1/1983) (ASFV).